The following is a 31-amino-acid chain: MPTITSYFGFLLAALTITSVLFIGLSKIRLI.

Residues 4–24 (ITSYFGFLLAALTITSVLFIG) form a helical membrane-spanning segment.

Belongs to the PetL family. In terms of assembly, the 4 large subunits of the cytochrome b6-f complex are cytochrome b6, subunit IV (17 kDa polypeptide, PetD), cytochrome f and the Rieske protein, while the 4 small subunits are PetG, PetL, PetM and PetN. The complex functions as a dimer.

Its subcellular location is the plastid. The protein resides in the chloroplast thylakoid membrane. In terms of biological role, component of the cytochrome b6-f complex, which mediates electron transfer between photosystem II (PSII) and photosystem I (PSI), cyclic electron flow around PSI, and state transitions. PetL is important for photoautotrophic growth as well as for electron transfer efficiency and stability of the cytochrome b6-f complex. This is Cytochrome b6-f complex subunit 6 from Lepidium virginicum (Virginia pepperweed).